A 75-amino-acid polypeptide reads, in one-letter code: Antitoxin MT0312 (75 aa).

Antitoxin component of a type II toxin-antitoxin (TA) system. This chain is Antitoxin MT0312, found in Mycobacterium tuberculosis (strain CDC 1551 / Oshkosh).